A 368-amino-acid chain; its full sequence is CCA-adding enzyme (368 aa).

Residues glycine 8 and arginine 11 each coordinate ATP. Positions 8 and 11 each coordinate CTP. Aspartate 21 and aspartate 23 together coordinate Mg(2+). Positions 91, 137, and 140 each coordinate ATP. CTP-binding residues include arginine 91, arginine 137, and arginine 140.

This sequence belongs to the tRNA nucleotidyltransferase/poly(A) polymerase family. Bacterial CCA-adding enzyme type 2 subfamily. Mg(2+) serves as cofactor.

The enzyme catalyses a tRNA precursor + 2 CTP + ATP = a tRNA with a 3' CCA end + 3 diphosphate. It catalyses the reaction a tRNA with a 3' CCA end + 2 CTP + ATP = a tRNA with a 3' CCACCA end + 3 diphosphate. Functionally, catalyzes the addition and repair of the essential 3'-terminal CCA sequence in tRNAs without using a nucleic acid template. Adds these three nucleotides in the order of C, C, and A to the tRNA nucleotide-73, using CTP and ATP as substrates and producing inorganic pyrophosphate. tRNA 3'-terminal CCA addition is required both for tRNA processing and repair. Also involved in tRNA surveillance by mediating tandem CCA addition to generate a CCACCA at the 3' terminus of unstable tRNAs. While stable tRNAs receive only 3'-terminal CCA, unstable tRNAs are marked with CCACCA and rapidly degraded. The chain is CCA-adding enzyme from Pseudomonas putida (strain ATCC 700007 / DSM 6899 / JCM 31910 / BCRC 17059 / LMG 24140 / F1).